The chain runs to 278 residues: Pyrroline-5-carboxylate reductase 2 (278 aa).

It belongs to the pyrroline-5-carboxylate reductase family.

The protein resides in the cytoplasm. The enzyme catalyses L-proline + NADP(+) = (S)-1-pyrroline-5-carboxylate + NADPH + 2 H(+). It catalyses the reaction L-proline + NAD(+) = (S)-1-pyrroline-5-carboxylate + NADH + 2 H(+). It functions in the pathway amino-acid biosynthesis; L-proline biosynthesis; L-proline from L-glutamate 5-semialdehyde: step 1/1. Its function is as follows. Catalyzes the reduction of 1-pyrroline-5-carboxylate (PCA) to L-proline. This Bacillus subtilis (strain 168) protein is Pyrroline-5-carboxylate reductase 2 (proI).